The following is a 425-amino-acid chain: Histidine--tRNA ligase (425 aa).

It belongs to the class-II aminoacyl-tRNA synthetase family. As to quaternary structure, homodimer.

It localises to the cytoplasm. It catalyses the reaction tRNA(His) + L-histidine + ATP = L-histidyl-tRNA(His) + AMP + diphosphate + H(+). This is Histidine--tRNA ligase from Histophilus somni (strain 129Pt) (Haemophilus somnus).